A 201-amino-acid polypeptide reads, in one-letter code: Small ribosomal subunit protein uS4 (201 aa).

The S4 RNA-binding domain occupies 93–153 (ARLDNVVYRM…EKSKSLEAID (61 aa)).

This sequence belongs to the universal ribosomal protein uS4 family. Part of the 30S ribosomal subunit. Contacts protein S5. The interaction surface between S4 and S5 is involved in control of translational fidelity.

Functionally, one of the primary rRNA binding proteins, it binds directly to 16S rRNA where it nucleates assembly of the body of the 30S subunit. Its function is as follows. With S5 and S12 plays an important role in translational accuracy. The polypeptide is Small ribosomal subunit protein uS4 (Flavobacterium psychrophilum (strain ATCC 49511 / DSM 21280 / CIP 103535 / JIP02/86)).